Here is a 313-residue protein sequence, read N- to C-terminus: 2-phosphoglycerate kinase (313 aa).

The ATP-cone domain maps to 8–95 (SRILVTDKEY…LWRRVLKKHS (88 aa)).

Belongs to the 2-phosphoglycerate kinase family. A divalent metal cation is required as a cofactor.

It catalyses the reaction (2R)-2-phosphoglycerate + ATP = (2R)-2,3-bisphosphoglycerate + ADP + H(+). The protein operates within thermoadapter biosynthesis; cyclic 2,3-diphosphoglycerate biosynthesis; cyclic 2,3-diphosphoglycerate from 2-phospho-D-glycerate: step 1/2. Functionally, catalyzes the phosphorylation of 2-phosphoglycerate to 2,3-diphosphoglycerate. Involved in the biosynthesis of cyclic 2,3-bisphosphoglycerate, a thermoprotectant. This chain is 2-phosphoglycerate kinase, found in Methanococcus maripaludis (strain C6 / ATCC BAA-1332).